We begin with the raw amino-acid sequence, 95 residues long: Aspartyl/glutamyl-tRNA(Asn/Gln) amidotransferase subunit C (95 aa).

It belongs to the GatC family. As to quaternary structure, heterotrimer of A, B and C subunits.

It catalyses the reaction L-glutamyl-tRNA(Gln) + L-glutamine + ATP + H2O = L-glutaminyl-tRNA(Gln) + L-glutamate + ADP + phosphate + H(+). The enzyme catalyses L-aspartyl-tRNA(Asn) + L-glutamine + ATP + H2O = L-asparaginyl-tRNA(Asn) + L-glutamate + ADP + phosphate + 2 H(+). In terms of biological role, allows the formation of correctly charged Asn-tRNA(Asn) or Gln-tRNA(Gln) through the transamidation of misacylated Asp-tRNA(Asn) or Glu-tRNA(Gln) in organisms which lack either or both of asparaginyl-tRNA or glutaminyl-tRNA synthetases. The reaction takes place in the presence of glutamine and ATP through an activated phospho-Asp-tRNA(Asn) or phospho-Glu-tRNA(Gln). The sequence is that of Aspartyl/glutamyl-tRNA(Asn/Gln) amidotransferase subunit C from Azotobacter vinelandii (strain DJ / ATCC BAA-1303).